A 3132-amino-acid chain; its full sequence is Enniatin synthetase (3132 aa).

The condensation 1 stretch occupies residues 53-466 (ADDKQRAVGH…VEKVDMMTQE (414 aa)). Residues 186 to 212 (NDEHPRQFETPDSSQATPEEDLQPNPS) are disordered. The interval 495 to 887 (SQSPNKAAVA…GRMDSQVKIR (393 aa)) is adenylation 1. The interval 994 to 1013 (SQKTHSTPSQQSQAAISSGT) is disordered. A Carrier 1 domain is found at 1010-1086 (SSGTDTETKL…GLKAIVIGTS (77 aa)). Serine 1047 is modified (O-(pantetheine 4'-phosphoryl)serine). A condensation 2 region spans residues 1105 to 1534 (SYAQNRMWFL…ETCISVLPLT (430 aa)). Residues 1563–1960 (FREQAAANPE…GRMDNQFKIR (398 aa)) form an adenylation 2 region. The segment at 2021-2177 (EGWQDHFESG…YLAEVIDGLI (157 aa)) is S-adenosyl-L-methionine-dependent N-methyltransferase. Carrier domains lie at 2504–2578 (FPIS…RQGL) and 2598–2672 (APRT…ESSH). 2 positions are modified to O-(pantetheine 4'-phosphoryl)serine: serine 2538 and serine 2632. The condensation 3 stretch occupies residues 2719–3124 (QDVYPSTQMQ…RHVLEEVCKT (406 aa)).

It belongs to the NRP synthetase family. The cofactor is pantetheine 4'-phosphate.

Its pathway is antibiotic biosynthesis; enniatin biosynthesis. Nonribosomal peptide synthetase that synthesizes enniatin by coupling three D-hydroxycarboxylic acids and three L-amino acids via amide and ester bonds in an alternating fashion. Whereas ESYN1 can accept different amino acids as precursors (L-valine, L-isoleucine or L-leucine), only one species of D-hydroxycarboxylic acid can be found in natural enniatin isolates (D-hydroxyisovaleric acid, D-Hiv). D-Hiv stems from L-valine deanimation by a valine aminotransferase to 2-keto-isovaleric acid (2-Kiv), which becomes subsequently reduced by a keto-isovaleric acid reductase (KivR) to D-Hiv. The polypeptide is Enniatin synthetase (Fusarium oxysporum (Fusarium vascular wilt)).